A 204-amino-acid chain; its full sequence is Threonylcarbamoyl-AMP synthase (204 aa).

The region spanning 10–204 is the YrdC-like domain; the sequence is ADELDLVANY…KDLLAGHILR (195 aa).

It belongs to the SUA5 family. TsaC subfamily.

The protein resides in the cytoplasm. It catalyses the reaction L-threonine + hydrogencarbonate + ATP = L-threonylcarbamoyladenylate + diphosphate + H2O. Functionally, required for the formation of a threonylcarbamoyl group on adenosine at position 37 (t(6)A37) in tRNAs that read codons beginning with adenine. Catalyzes the conversion of L-threonine, HCO(3)(-)/CO(2) and ATP to give threonylcarbamoyl-AMP (TC-AMP) as the acyladenylate intermediate, with the release of diphosphate. The sequence is that of Threonylcarbamoyl-AMP synthase from Moraxella catarrhalis (strain BBH18).